A 341-amino-acid chain; its full sequence is Antihemorrhagic factor BJ46a (341 aa).

An N-terminal signal peptide occupies residues 1-19; it reads MNSLVALVLLGQIIGSTLS. Cystatin fetuin-A-type domains follow at residues 22-130 and 141-254; these read VRGD…AKCH and RNCP…SDCV. Residues 23-25 carry the Cell attachment site motif; the sequence is RGD. Disulfide bonds link C28/C332, C85/C96, C110/C129, C143/C146, C205/C217, and C230/C253. N95 is a glycosylation site (N-linked (GlcNAc...) asparagine). Residue N204 is glycosylated (N-linked (GlcNAc...) asparagine). N282 and N293 each carry an N-linked (GlcNAc...) asparagine glycan.

Homodimer. Expressed by the liver.

The protein resides in the secreted. In terms of biological role, potent inhibitor of hemorrhagic activity but also proteolytic activities of atrolysin C and jararhagin. Inhibition occurs by formation of a non-covalent complex between BJ46a and the proteinases at their metalloproteinase domains. The sequence is that of Antihemorrhagic factor BJ46a from Bothrops jararaca (Jararaca).